The primary structure comprises 427 residues: UDP-N-acetylglucosamine 1-carboxyvinyltransferase 1 (427 aa).

Lys-24–Asn-25 serves as a coordination point for phosphoenolpyruvate. Arg-97 provides a ligand contact to UDP-N-acetyl-alpha-D-glucosamine. The Proton donor role is filled by Cys-121. Residue Cys-121 is modified to 2-(S-cysteinyl)pyruvic acid O-phosphothioketal. UDP-N-acetyl-alpha-D-glucosamine-binding positions include Arg-126–Leu-130, Asp-309, and Val-331.

Belongs to the EPSP synthase family. MurA subfamily.

It is found in the cytoplasm. It carries out the reaction phosphoenolpyruvate + UDP-N-acetyl-alpha-D-glucosamine = UDP-N-acetyl-3-O-(1-carboxyvinyl)-alpha-D-glucosamine + phosphate. Its pathway is cell wall biogenesis; peptidoglycan biosynthesis. Its function is as follows. Cell wall formation. Adds enolpyruvyl to UDP-N-acetylglucosamine. The chain is UDP-N-acetylglucosamine 1-carboxyvinyltransferase 1 from Lactococcus lactis subsp. lactis (strain IL1403) (Streptococcus lactis).